Here is a 482-residue protein sequence, read N- to C-terminus: Anaerobic nitric oxide reductase flavorubredoxin (482 aa).

Positions L30–I210 are zinc metallo-hydrolase. Residues H79, E81, D83, H147, D166, and H227 each contribute to the Fe cation site. Positions I254 to A393 constitute a Flavodoxin-like domain. Residues T260–N264 and A342–L369 each bind FMN. The region spanning G426 to L477 is the Rubredoxin-like domain. The Fe cation site is built by C431, C434, C464, and C467.

The protein in the N-terminal section; belongs to the zinc metallo-hydrolase group 3 family. As to quaternary structure, homotetramer. It depends on Fe cation as a cofactor. The cofactor is FMN.

Its subcellular location is the cytoplasm. The protein operates within nitrogen metabolism; nitric oxide reduction. In terms of biological role, anaerobic nitric oxide reductase; uses NADH to detoxify nitric oxide (NO), protecting several 4Fe-4S NO-sensitive enzymes. Has at least 2 reductase partners, only one of which (NorW, flavorubredoxin reductase) has been identified. NO probably binds to the di-iron center; electrons enter from the NorW at rubredoxin and are transferred sequentially to the FMN center and the di-iron center. Also able to function as an aerobic oxygen reductase. This Citrobacter koseri (strain ATCC BAA-895 / CDC 4225-83 / SGSC4696) protein is Anaerobic nitric oxide reductase flavorubredoxin.